Here is a 286-residue protein sequence, read N- to C-terminus: Bifunctional protein FolD (286 aa).

NADP(+) contacts are provided by residues Gly166–Ser168, Ser191, and Ile232.

Belongs to the tetrahydrofolate dehydrogenase/cyclohydrolase family. In terms of assembly, homodimer.

The catalysed reaction is (6R)-5,10-methylene-5,6,7,8-tetrahydrofolate + NADP(+) = (6R)-5,10-methenyltetrahydrofolate + NADPH. It carries out the reaction (6R)-5,10-methenyltetrahydrofolate + H2O = (6R)-10-formyltetrahydrofolate + H(+). It participates in one-carbon metabolism; tetrahydrofolate interconversion. Functionally, catalyzes the oxidation of 5,10-methylenetetrahydrofolate to 5,10-methenyltetrahydrofolate and then the hydrolysis of 5,10-methenyltetrahydrofolate to 10-formyltetrahydrofolate. In Alkalilimnicola ehrlichii (strain ATCC BAA-1101 / DSM 17681 / MLHE-1), this protein is Bifunctional protein FolD.